The primary structure comprises 787 residues: Endonuclease MutS2 (787 aa).

331–338 (GPNTGGKT) contributes to the ATP binding site. One can recognise a Smr domain in the interval 711-786 (IDVRGKTSDD…EQGVTIVELR (76 aa)).

It belongs to the DNA mismatch repair MutS family. MutS2 subfamily. In terms of assembly, homodimer. Binds to stalled ribosomes, contacting rRNA.

Functionally, endonuclease that is involved in the suppression of homologous recombination and thus may have a key role in the control of bacterial genetic diversity. Acts as a ribosome collision sensor, splitting the ribosome into its 2 subunits. Detects stalled/collided 70S ribosomes which it binds and splits by an ATP-hydrolysis driven conformational change. Acts upstream of the ribosome quality control system (RQC), a ribosome-associated complex that mediates the extraction of incompletely synthesized nascent chains from stalled ribosomes and their subsequent degradation. Probably generates substrates for RQC. The polypeptide is Endonuclease MutS2 (Caldicellulosiruptor saccharolyticus (strain ATCC 43494 / DSM 8903 / Tp8T 6331)).